A 224-amino-acid polypeptide reads, in one-letter code: UPF0173 metal-dependent hydrolase Ta0764 (224 aa).

This sequence belongs to the UPF0173 family.

This chain is UPF0173 metal-dependent hydrolase Ta0764, found in Thermoplasma acidophilum (strain ATCC 25905 / DSM 1728 / JCM 9062 / NBRC 15155 / AMRC-C165).